The primary structure comprises 393 residues: Flavohemoprotein (393 aa).

A Globin domain is found at 1–139 (MLSNAQRALI…LADLLIEAEE (139 aa)). Heme b is bound at residue His85. Residues Tyr95 and Glu138 each act as charge relay system in the active site. The interval 150–393 (GGWRGVRRFR…FFGPAAALDA (244 aa)) is reductase. The region spanning 153–256 (RGVRRFRVAR…FPPAGDFVLR (104 aa)) is the FAD-binding FR-type domain. Residues Tyr191 and 205-208 (RNYS) contribute to the FAD site. Residue 268-273 (GVGITP) coordinates NADP(+). 384–387 (FFGP) is a binding site for FAD.

This sequence belongs to the globin family. Two-domain flavohemoproteins subfamily. It in the C-terminal section; belongs to the flavoprotein pyridine nucleotide cytochrome reductase family. Heme b serves as cofactor. It depends on FAD as a cofactor.

It catalyses the reaction 2 nitric oxide + NADPH + 2 O2 = 2 nitrate + NADP(+) + H(+). The catalysed reaction is 2 nitric oxide + NADH + 2 O2 = 2 nitrate + NAD(+) + H(+). Functionally, is involved in NO detoxification in an aerobic process, termed nitric oxide dioxygenase (NOD) reaction that utilizes O(2) and NAD(P)H to convert NO to nitrate, which protects the bacterium from various noxious nitrogen compounds. Therefore, plays a central role in the inducible response to nitrosative stress. The sequence is that of Flavohemoprotein from Pseudomonas aeruginosa (strain ATCC 15692 / DSM 22644 / CIP 104116 / JCM 14847 / LMG 12228 / 1C / PRS 101 / PAO1).